Reading from the N-terminus, the 1139-residue chain is Ras GTPase-activating protein nGAP (1139 aa).

A disordered region spans residues 1–87 (MQTPEVPAER…SRGLPKLKES (87 aa)). At Ser16 the chain carries Phosphoserine. Residues 17–36 (ISGTSTSEKPNSMDTANTSP) show a composition bias toward polar residues. One can recognise a PH domain in the interval 41–158 (GFFSKRLKGS…WMENLRRTVQ (118 aa)). Over residues 45–56 (KRLKGSIKRTKS) the composition is skewed to basic residues. Residues 73 to 87 (STDDRSRGLPKLKES) show a composition bias toward basic and acidic residues. A Phosphoserine modification is found at Ser89. Residues 149–267 (WMENLRRTVQ…TGRQFVEKWY (119 aa)) enclose the C2 domain. In terms of domain architecture, Ras-GAP spans 343–551 (GRAKDFLTDL…GGMKRFLLEI (209 aa)). Thr620 is subject to Phosphothreonine. The residue at position 663 (Ser663) is a Phosphoserine. Disordered regions lie at residues 684–704 (ASSQSMTYSEKDERESSLPNG), 751–782 (ETQSTPQSAPQVRRPLHPALNQPGGLQPLSFQ), 803–869 (SLEN…GQAQ), 910–953 (EPVQ…SATM), and 1116–1139 (NGISPTNPTKLSITENGEFKNSSC). 2 stretches are compositionally biased toward polar residues: residues 751–760 (ETQSTPQSAP) and 803–818 (SLENLSTASSRSQSNS). Positions 833–855 (DFTKRSTQSEDFSRRHTVPDRHI) are enriched in basic and acidic residues. Ser864 is subject to Phosphoserine. Over residues 916–928 (SRSRQQSSSSRES) the composition is skewed to low complexity.

In terms of assembly, interacts with PEAK1.

Inhibitory regulator of the Ras-cyclic AMP pathway. The protein is Ras GTPase-activating protein nGAP (RASAL2) of Homo sapiens (Human).